Consider the following 427-residue polypeptide: Inorganic pyrophosphatase 1 (427 aa).

Residues 36–52 (SSSSNTATTSTSSSNTS) are compositionally biased toward low complexity. Disordered regions lie at residues 36–63 (SSSS…TSRP) and 77–118 (SMDS…RSLH). Composition is skewed to polar residues over residues 53-63 (QKWATSRTSRP) and 77-114 (SMDS…ANSE). Residues Asp-259, Asp-264, and Asp-296 each coordinate Mg(2+).

The protein belongs to the PPase family. It depends on Mg(2+) as a cofactor. In terms of tissue distribution, expressed in coelomocytes, the intestine and in the nervous system including the nerve cords and sensory neurons.

Its subcellular location is the cytoplasm. The catalysed reaction is diphosphate + H2O = 2 phosphate + H(+). In terms of biological role, catalyzes the hydrolysis of inorganic pyrophosphate (PPi) forming two phosphate ions. Plays a role in intestinal development and subsequent normal secretory, digestive and absorption functions. Required for larval development. This chain is Inorganic pyrophosphatase 1, found in Caenorhabditis elegans.